The chain runs to 92 residues: Ezrin (92 aa).

The FERM domain occupies Q1 to R72. K15 carries the post-translational modification N6-acetyllysine. The segment at E42–K92 is interaction with SCYL3.

Interacts with PALS1 and NHERF2. Found in a complex with EZR, PODXL and NHERF2. Interacts with MCC, PLEKHG6, PODXL, SCYL3/PACE1, NHERF1 and TMEM8B. Interacts (when phosphorylated) with FES/FPS. Interacts with dimeric S100P, the interaction may be activating through unmasking of F-actin binding sites. Identified in complexes that contain VIM, EZR, AHNAK, BFSP1, BFSP2, ANK2, PLEC, PRX and spectrin. Detected in a complex composed of at least EZR, AHNAK, PPL and PRX. Interacts with PDPN (via cytoplasmic domain); activates RHOA and promotes epithelial-mesenchymal transition. Interacts with SPN/CD43 cytoplasmic tail, CD44 and ICAM2. Interacts with CLIC5; may work together in a complex which also includes RDX and MYO6 to stabilize linkages between the plasma membrane and subjacent actin cytoskeleton at the base of stereocilia. In terms of processing, phosphorylated by tyrosine-protein kinases. Phosphorylation by ROCK2 suppresses the head-to-tail association of the N-terminal and C-terminal halves resulting in an opened conformation which is capable of actin and membrane-binding. Post-translationally, S-nitrosylation is induced by interferon-gamma and oxidatively-modified low-densitity lipoprotein (LDL(ox)) possibly implicating the iNOS-S100A8/9 transnitrosylase complex.

The protein localises to the apical cell membrane. It is found in the cell projection. The protein resides in the microvillus membrane. It localises to the ruffle membrane. Its subcellular location is the cytoplasm. The protein localises to the cell cortex. It is found in the cytoskeleton. The protein resides in the microvillus. A head-to-tail association, of the N-terminal and C-terminal halves results in a closed conformation (inactive form) which is incapable of actin or membrane-binding. Probably involved in connections of major cytoskeletal structures to the plasma membrane. In epithelial cells, required for the formation of microvilli and membrane ruffles on the apical pole. Along with PLEKHG6, required for normal macropinocytosis. This chain is Ezrin, found in Mesocricetus auratus (Golden hamster).